The primary structure comprises 84 residues: Putative antitoxin VapB7 (84 aa).

In terms of biological role, antitoxin component of a possible type II toxin-antitoxin (TA) system. The cognate toxin is VapC7. This Mycobacterium tuberculosis (strain ATCC 25618 / H37Rv) protein is Putative antitoxin VapB7 (vapB7).